The following is a 642-amino-acid chain: Threonine--tRNA ligase (642 aa).

The 61-residue stretch at 1–61 folds into the TGS domain; the sequence is MPIITLPDGS…EHDASLEIIT (61 aa). Residues 244 to 535 form a catalytic region; sequence DHRKIGKQLD…LIEEYAGFFP (292 aa). The Zn(2+) site is built by Cys-335, His-386, and His-512.

The protein belongs to the class-II aminoacyl-tRNA synthetase family. Homodimer. Zn(2+) serves as cofactor.

The protein resides in the cytoplasm. It carries out the reaction tRNA(Thr) + L-threonine + ATP = L-threonyl-tRNA(Thr) + AMP + diphosphate + H(+). Catalyzes the attachment of threonine to tRNA(Thr) in a two-step reaction: L-threonine is first activated by ATP to form Thr-AMP and then transferred to the acceptor end of tRNA(Thr). Also edits incorrectly charged L-seryl-tRNA(Thr). The sequence is that of Threonine--tRNA ligase from Vibrio cholerae serotype O1 (strain ATCC 39541 / Classical Ogawa 395 / O395).